A 429-amino-acid chain; its full sequence is Ribosomal RNA small subunit methyltransferase B (429 aa).

S-adenosyl-L-methionine contacts are provided by residues 254-260 (CAAPGGK), D277, D303, and D322. Catalysis depends on C375, which acts as the Nucleophile.

It belongs to the class I-like SAM-binding methyltransferase superfamily. RsmB/NOP family.

It localises to the cytoplasm. The enzyme catalyses cytidine(967) in 16S rRNA + S-adenosyl-L-methionine = 5-methylcytidine(967) in 16S rRNA + S-adenosyl-L-homocysteine + H(+). In terms of biological role, specifically methylates the cytosine at position 967 (m5C967) of 16S rRNA. The protein is Ribosomal RNA small subunit methyltransferase B of Escherichia coli (strain SMS-3-5 / SECEC).